A 318-amino-acid polypeptide reads, in one-letter code: Transaldolase (318 aa).

K132 acts as the Schiff-base intermediate with substrate in catalysis.

The protein belongs to the transaldolase family. Type 1 subfamily. Homodimer.

It is found in the cytoplasm. The enzyme catalyses D-sedoheptulose 7-phosphate + D-glyceraldehyde 3-phosphate = D-erythrose 4-phosphate + beta-D-fructose 6-phosphate. It functions in the pathway carbohydrate degradation; pentose phosphate pathway; D-glyceraldehyde 3-phosphate and beta-D-fructose 6-phosphate from D-ribose 5-phosphate and D-xylulose 5-phosphate (non-oxidative stage): step 2/3. Its function is as follows. Transaldolase is important for the balance of metabolites in the pentose-phosphate pathway. This Shewanella loihica (strain ATCC BAA-1088 / PV-4) protein is Transaldolase.